The primary structure comprises 168 residues: Protein-export protein SecB (168 aa).

Residues 1–20 form a disordered region; it reads MTDETAANGENEAGRQSQSS.

It belongs to the SecB family. Homotetramer, a dimer of dimers. One homotetramer interacts with 1 SecA dimer.

Its subcellular location is the cytoplasm. One of the proteins required for the normal export of preproteins out of the cell cytoplasm. It is a molecular chaperone that binds to a subset of precursor proteins, maintaining them in a translocation-competent state. It also specifically binds to its receptor SecA. This is Protein-export protein SecB from Rhodospirillum centenum (strain ATCC 51521 / SW).